Here is a 562-residue protein sequence, read N- to C-terminus: NAD-dependent malic enzyme (562 aa).

Y101 (proton donor) is an active-site residue. R154 lines the NAD(+) pocket. The active-site Proton acceptor is K172. E243, D244, and D267 together coordinate a divalent metal cation. Positions 267 and 415 each coordinate NAD(+).

Belongs to the malic enzymes family. In terms of assembly, homotetramer. It depends on Mg(2+) as a cofactor. Requires Mn(2+) as cofactor.

It carries out the reaction (S)-malate + NAD(+) = pyruvate + CO2 + NADH. It catalyses the reaction oxaloacetate + H(+) = pyruvate + CO2. This Shewanella piezotolerans (strain WP3 / JCM 13877) protein is NAD-dependent malic enzyme.